A 309-amino-acid chain; its full sequence is MTSVLHYSLLLLLLGVVILTTPVLANLKPRFFYEPPPIEKPPTYEPPPFYKPPYYPPPVHHPPPEYQPPHEKTPPEYLPPPHEKPPPEYLPPHEKPPPEYQPPHEKPPHENPPPEHQPPHEKPPEHQPPHEKPPPEYEPPHEKPPPEYQPPHEKPPPEYQPPHEKPPPEYQPPHEKPPPEHQPPHEKPPEHQPPHEKPPPEYQPPHEKPPPEYQPPQEKPPHEKPPPEYQPPHEKPPPEHQPPHEKPPPVYPPPYEKPPPVYEPPYEKPPPVVYPPPHEKPPIYEPPPLEKPPVYNPPPYGRYPPSKKN.

The N-terminal stretch at 1-25 (MTSVLHYSLLLLLLGVVILTTPVLA) is a signal peptide. The segment covering 56 to 67 (PPPVHHPPPEYQ) has biased composition (pro residues). Residues 56–309 (PPPVHHPPPE…YGRYPPSKKN (254 aa)) form a disordered region. 2 stretches are compositionally biased toward basic and acidic residues: residues 81 to 210 (PHEK…EKPP) and 219 to 247 (KPPH…HEKP). Composition is skewed to pro residues over residues 248 to 276 (PPVY…VYPP) and 283 to 302 (IYEP…PYGR).

It belongs to the nodulin 75 family.

Functionally, involved in early stages of root nodule development. This is Early nodulin-75 (ENOD2A) from Glycine max (Soybean).